The chain runs to 194 residues: Protein GrpE (194 aa).

Positions 1 to 24 are enriched in basic and acidic residues; the sequence is MEEKDKEEKVTGENLEPEDKNLEQ. A disordered region spans residues 1–41; sequence MEEKDKEEKVTGENLEPEDKNLEQEDKEEVVGPQEEQQIDE.

This sequence belongs to the GrpE family. As to quaternary structure, homodimer.

The protein resides in the cytoplasm. In terms of biological role, participates actively in the response to hyperosmotic and heat shock by preventing the aggregation of stress-denatured proteins, in association with DnaK and GrpE. It is the nucleotide exchange factor for DnaK and may function as a thermosensor. Unfolded proteins bind initially to DnaJ; upon interaction with the DnaJ-bound protein, DnaK hydrolyzes its bound ATP, resulting in the formation of a stable complex. GrpE releases ADP from DnaK; ATP binding to DnaK triggers the release of the substrate protein, thus completing the reaction cycle. Several rounds of ATP-dependent interactions between DnaJ, DnaK and GrpE are required for fully efficient folding. The chain is Protein GrpE from Carboxydothermus hydrogenoformans (strain ATCC BAA-161 / DSM 6008 / Z-2901).